A 122-amino-acid polypeptide reads, in one-letter code: MSKALLRFVRLSPTKARLIARQIQGMNAELAIASLEFTPNKAARVLSKVVASAVANGSLDAKSALIVSCRVDAGPVLRRSIPRAKGRATAIRKPTSHVFVEVAEGKEMKSSKSHKKNQAEGK.

The tract at residues 102–122 is disordered; sequence VAEGKEMKSSKSHKKNQAEGK.

Belongs to the universal ribosomal protein uL22 family. In terms of assembly, part of the 50S ribosomal subunit.

Its function is as follows. This protein binds specifically to 23S rRNA; its binding is stimulated by other ribosomal proteins, e.g. L4, L17, and L20. It is important during the early stages of 50S assembly. It makes multiple contacts with different domains of the 23S rRNA in the assembled 50S subunit and ribosome. The globular domain of the protein is located near the polypeptide exit tunnel on the outside of the subunit, while an extended beta-hairpin is found that lines the wall of the exit tunnel in the center of the 70S ribosome. The polypeptide is Large ribosomal subunit protein uL22 (Helicobacter pylori (strain ATCC 700392 / 26695) (Campylobacter pylori)).